Reading from the N-terminus, the 281-residue chain is Protein synthesis inhibitor I (281 aa).

Position 2 is an N-acetylalanine (Ala-2). The active site involves Glu-175.

This sequence belongs to the ribosome-inactivating protein family. Type 1 RIP subfamily.

The protein resides in the cytoplasm. It carries out the reaction Endohydrolysis of the N-glycosidic bond at one specific adenosine on the 28S rRNA.. Its function is as follows. Inhibits the elongation phase of protein synthesis. It inactivates fungal ribosomes even more effectively than mammalian ribosomes and is thought to function as a constitutive antifungal agent in plants. The protein is Protein synthesis inhibitor I (RIP30) of Hordeum vulgare (Barley).